The primary structure comprises 214 residues: Ras-related protein RABA5c (214 aa).

A GTP-binding site is contributed by 19–26 (GDSAVGKS). Residues 41–49 (SKATIGVEF) carry the Effector region motif. GTP contacts are provided by residues 67-71 (DTAGQ), 125-128 (NKCD), and 155-156 (SA). 2 S-geranylgeranyl cysteine lipidation sites follow: cysteine 211 and cysteine 212.

It belongs to the small GTPase superfamily. Rab family. In terms of assembly, interacts (via C-terminus) with GDI1. Interacts with PUX8/SAY1. Expressed in roots and actively dividing cells.

The protein localises to the golgi apparatus membrane. The protein resides in the golgi apparatus. It localises to the trans-Golgi network membrane. Its subcellular location is the cell membrane. In terms of biological role, intracellular vesicle trafficking and protein transport. Binds GTP and GDP and possesses intrinsic GTPase activity. The protein is Ras-related protein RABA5c (RABA5C) of Arabidopsis thaliana (Mouse-ear cress).